Consider the following 388-residue polypeptide: MVELNDVPGEEEFPRATYLETMVRLLDTVSYNDENFTDEERVECLKYAYGKAAEHFAQPHVQETLKVPPKRMAAALKTIVGMCVYSWCRVSKEVMADLSIHYTYTLLLDDSREEPAGTMATWYEDLLNARPQAHGWWRLVNDFIPNVLRHYGGYCQMNMVRSTIDFFQGCWIEQHNFKGFRGSSDYPGFLRRINGLGHCVGSSIWPIELVDEEEHFLEITTAIAQMENWMVWTNDLFSFYKEYFAERDQTSLVNNYVECEGITLDQALDKLCKDTIRSSEEIIQVFHDKDPKMYEILTRFIQGYITWHLCDDRYRLVEVYEAAGDDPVAQKFKKYAESARRVGAIDPARYCVPSVTELCEREMAKQSAGRSWDFGLGKIANKISSVAQ.

Mg(2+)-binding residues include D109, E173, N234, S238, E242, and D248. Positions 109-113 are aspartate-rich domain; it reads DDSRE.

It belongs to the trichodiene synthase family. The cofactor is Mg(2+). Requires Mn(2+) as cofactor.

The enzyme catalyses (2E,6E)-farnesyl diphosphate = trichodiene + diphosphate. It functions in the pathway sesquiterpene biosynthesis; trichothecene biosynthesis. Trichodiene synthase; part of the gene cluster that mediates the production of the antimicrobial trichothecene harzianum A (HA) that plays a role in Botrytis cinerea antagonistic activity and plant defense priming. The biosynthesis of harzianum A begins with the cyclization of farnesyl diphosphate to trichodiene and is catalyzed by the trichodiene synthase TRI5. Trichodiene undergoes a series of oxygenations catalyzed by the cytochrome P450 monooxygenase TRI4. TRI4 controls the addition of 3 oxygens at C-2, C-11, and the C-12, C-13-epoxide to form the intermediate isotrichodiol. Isotrichodiol then undergoes a non-enzymatic isomerization and cyclization to form 12,13-epoxytrichothec-9-ene (EPT) which is further converted to trichodermol by the cytochrome P450 monooxygenase TRI11 via C-4 hydroxylation. The last step of HA synthesis is esterification of an octatriendioyl moiety to the C-4 oxygen of trichodermol. The octatriendioyl moiety is probably produced by the polyketide synthase TRI17 and the esterification performed by the trichothecene O-acetyltransferase TRI3. The chain is Trichodiene synthase from Trichoderma arundinaceum.